The chain runs to 307 residues: Oxygen-dependent coproporphyrinogen-III oxidase (307 aa).

Position 99 (serine 99) interacts with substrate. Histidine 103 and histidine 113 together coordinate a divalent metal cation. Histidine 113 (proton donor) is an active-site residue. A substrate-binding site is contributed by 115-117 (NVR). The a divalent metal cation site is built by histidine 152 and histidine 182. The segment at 247-282 (YVEFNLVFDRGTLFGLQSGGRTESILLSMPPTAGWR) is important for dimerization. 265-267 (GGR) is a binding site for substrate.

This sequence belongs to the aerobic coproporphyrinogen-III oxidase family. As to quaternary structure, homodimer. A divalent metal cation is required as a cofactor.

The protein localises to the cytoplasm. It carries out the reaction coproporphyrinogen III + O2 + 2 H(+) = protoporphyrinogen IX + 2 CO2 + 2 H2O. The protein operates within porphyrin-containing compound metabolism; protoporphyrin-IX biosynthesis; protoporphyrinogen-IX from coproporphyrinogen-III (O2 route): step 1/1. Its function is as follows. Involved in the heme biosynthesis. Catalyzes the aerobic oxidative decarboxylation of propionate groups of rings A and B of coproporphyrinogen-III to yield the vinyl groups in protoporphyrinogen-IX. The protein is Oxygen-dependent coproporphyrinogen-III oxidase of Burkholderia pseudomallei (strain 1106a).